The sequence spans 204 residues: LexA repressor (204 aa).

The segment at residues 28-48 is a DNA-binding region (H-T-H motif); that stretch reads RAEIANRLGFKSANAAEEHLK. Residues Ser-121 and Lys-158 each act as for autocatalytic cleavage activity in the active site.

It belongs to the peptidase S24 family. In terms of assembly, homodimer.

The catalysed reaction is Hydrolysis of Ala-|-Gly bond in repressor LexA.. Its function is as follows. Represses a number of genes involved in the response to DNA damage (SOS response), including recA and lexA. In the presence of single-stranded DNA, RecA interacts with LexA causing an autocatalytic cleavage which disrupts the DNA-binding part of LexA, leading to derepression of the SOS regulon and eventually DNA repair. This Shewanella frigidimarina (strain NCIMB 400) protein is LexA repressor.